We begin with the raw amino-acid sequence, 342 residues long: Histidinol-phosphate aminotransferase 2 (342 aa).

An N6-(pyridoxal phosphate)lysine modification is found at K206.

It belongs to the class-II pyridoxal-phosphate-dependent aminotransferase family. Histidinol-phosphate aminotransferase subfamily. The cofactor is pyridoxal 5'-phosphate.

The catalysed reaction is L-histidinol phosphate + 2-oxoglutarate = 3-(imidazol-4-yl)-2-oxopropyl phosphate + L-glutamate. It functions in the pathway amino-acid biosynthesis; L-histidine biosynthesis; L-histidine from 5-phospho-alpha-D-ribose 1-diphosphate: step 7/9. The polypeptide is Histidinol-phosphate aminotransferase 2 (hisC2) (Archaeoglobus fulgidus (strain ATCC 49558 / DSM 4304 / JCM 9628 / NBRC 100126 / VC-16)).